The following is a 378-amino-acid chain: Acyl-coenzyme A diphosphatase NUDT19 (378 aa).

Residues 7–258 (HWREAASVLL…EIWLAPPQFY (252 aa)) form the Nudix hydrolase domain. Residues 105–126 (SPLPGEVAFRICAIRETFEEAG) carry the Nudix box motif. E120 and E124 together coordinate Mg(2+). Positions 376-378 (SRL) match the Microbody targeting signal motif.

This sequence belongs to the Nudix hydrolase family. In terms of assembly, monomer. Mg(2+) is required as a cofactor. The cofactor is Mn(2+).

Its subcellular location is the peroxisome. The enzyme catalyses an acyl-CoA + H2O = an acyl-4'-phosphopantetheine + adenosine 3',5'-bisphosphate + 2 H(+). It carries out the reaction CoA + H2O = (R)-4'-phosphopantetheine + adenosine 3',5'-bisphosphate + 2 H(+). The catalysed reaction is hexanoyl-CoA + H2O = hexanoyl-4'-phosphopantetheine + adenosine 3',5'-bisphosphate + 2 H(+). It catalyses the reaction octanoyl-CoA + H2O = S-octanoyl-4'-phosphopantetheine + adenosine 3',5'-bisphosphate + 2 H(+). The enzyme catalyses butanoyl-CoA + H2O = S-butanoyl-4'-phosphopantetheine + adenosine 3',5'-bisphosphate + 2 H(+). It carries out the reaction propanoyl-CoA + H2O = propanoyl-4'-phosphopantetheine + adenosine 3',5'-bisphosphate + 2 H(+). The catalysed reaction is malonyl-CoA + H2O = malonyl-4'-phosphopantetheine + adenosine 3',5'-bisphosphate + 2 H(+). It catalyses the reaction succinyl-CoA + H2O = succinyl-4'-phosphopantetheine + adenosine 3',5'-bisphosphate + 2 H(+). The enzyme catalyses choloyl-CoA + H2O = S-choloyl-4'-phosphopantetheine + adenosine 3',5'-bisphosphate + 2 H(+). It carries out the reaction 4,8-dimethylnonanoyl-CoA + H2O = S-(4,8-dimethylnonanoyl)-4'-phosphopantetheine + adenosine 3',5'-bisphosphate + 2 H(+). The catalysed reaction is (9Z,12Z,15Z)-octadecatrienoyl-CoA + H2O = S-(9Z,12Z,15Z-octadecatrienoyl)-4'-phosphopantetheine + adenosine 3',5'-bisphosphate + 2 H(+). It catalyses the reaction (9Z,12Z)-octadecadienoyl-CoA + H2O = S-(9Z,12Z-octadecadienoyl)-4'-phosphopantetheine + adenosine 3',5'-bisphosphate + 2 H(+). The enzyme catalyses (9Z)-hexadecenoyl-CoA + H2O = S-(9Z-hexadecenoyl)-4'-phosphopantetheine + adenosine 3',5'-bisphosphate + 2 H(+). It carries out the reaction (9Z)-tetradecenoyl-CoA + H2O = S-(9Z-tetradecenoyl)-4'-phosphopantetheine + adenosine 3',5'-bisphosphate + 2 H(+). The catalysed reaction is (6Z)-octenoyl-CoA + H2O = S-(6Z-octenoyl)-4'-phosphopantetheine + adenosine 3',5'-bisphosphate + 2 H(+). It catalyses the reaction hexadecanoyl-CoA + H2O = S-hexadecanoyl-4'-phosphopantetheine + adenosine 3',5'-bisphosphate + 2 H(+). The enzyme catalyses tetradecanoyl-CoA + H2O = tetradecanoyl-4'-phosphopantetheine + adenosine 3',5'-bisphosphate + 2 H(+). It carries out the reaction dodecanoyl-CoA + H2O = S-dodecanoyl-4'-phosphopantetheine + adenosine 3',5'-bisphosphate + 2 H(+). The catalysed reaction is a 5'-end CoA-ribonucleoside in mRNA + H2O = a 5'-end phospho-adenosine-phospho-ribonucleoside in mRNA + (R)-4'-phosphopantetheine + 2 H(+). Functionally, fatty acyl-coenzyme A (CoA) diphosphatase that hydrolyzes fatty acyl-CoA to yield acyl-4'-phosphopantetheine and adenosine 3',5'-bisphosphate. Mediates the hydrolysis of a wide range of CoA esters, including choloyl-CoA and branched-chain fatty-acyl-CoA esters and at low substrate concentrations medium and long-chain fatty-acyl-CoA esters are the primary substrates. Highest activity seen with medium-chain acyl-CoA esters and higher rates of activity seen with the unsaturated acyl-CoA esters compared with the saturated esters. Exhibits decapping activity towards dpCoA-capped RNAs in vitro. The polypeptide is Acyl-coenzyme A diphosphatase NUDT19 (NUDT19) (Gallus gallus (Chicken)).